The chain runs to 319 residues: CCAAT/enhancer-binding protein homolog 1 (319 aa).

The n' domain; required for axon regeneration stretch occupies residues 53 to 67; it reads SLTIAASLQQRDRER. The segment at 163 to 319 is disordered; sequence TRRAVKRPVP…QRHILENFNK (157 aa). Positions 171–181 are enriched in basic and acidic residues; sequence VPYDDYQKEYS. Acidic residues predominate over residues 182–198; that stretch reads EESSDMTDNDGSVDDSY. Basic and acidic residues-rich tracts occupy residues 225–248, 255–274, 281–291, and 302–319; these read LKAD…DAVR, KELQ…RIAE, SERDARRRDQD, and PMKE…NFNK. The region spanning 233-308 is the bZIP domain; that stretch reads EPTYKLKRAR…NKGPMKEQRM (76 aa). The segment at 237 to 271 is basic motif; sequence KLKRARNNDAVRKSRKKAKELQDKKEAEHDKMKRR. Positions 275-308 are leucine-zipper; it reads LEGLLQSERDARRRDQDTLEQLLRNKGPMKEQRM.

This sequence belongs to the bZIP family. C/EBP subfamily. As to quaternary structure, may interact with transcription factor ets-4. May interact (via N-terminus) with nipi-3. May interact (via N-terminus) with importin subunit alpha ima-3. Expressed in touch and motor neurons.

It localises to the synapse. The protein localises to the cytoplasm. The protein resides in the nucleus. It is found in the cell projection. Its subcellular location is the axon. Functionally, transcription factor. Binds to promoter regions of target genes, perhaps at the motif 5'-[AGCT]TT[AGT][TC]GAAA[ACT]-3'. Modulates expression of genes involved in development and in stress responses, including those regulating the p38/MAPK signaling pathways such as MAPKK sek-1 and phosphatase vhp-1. Involved in innate immunity. Plays a role in repressing the response to infection by the Gram-negative bacterium P.aeruginosa, perhaps acting independently of the pmk-1 or pmk-3 p38/MAPK pathways. However, also plays a protective role in the response to infection by P.aeruginosa. Required in axonal regrowth following injury and synaptogenesis. Following axon injury, in concert with transcription factor ets-4, activates expression of receptor tyrosine kinase svh-2. May function downstream of the Ca2+-activated p38/MAPK pathway to promote axon regeneration. Plays a role in modulating polymerization of neuronal microtubules. Involved in modulating lipid homeostasis. This is CCAAT/enhancer-binding protein homolog 1 from Caenorhabditis elegans.